The following is a 275-amino-acid chain: Trypsin-3 (275 aa).

A signal peptide spans 1 to 22 (MISNKIAILLAVLVVAVACAQA). The propeptide at 23–48 (RVALKHRSVQALPRFLPRPKYDVGHR) is activation peptide. Residues 49–274 (IVGGFEIDVS…VRDWVRENSG (226 aa)) form the Peptidase S1 domain. A disulfide bridge links Cys74 with Cys90. Residues His89 and Asp134 each act as charge relay system in the active site. 2 disulfides stabilise this stretch: Cys199-Cys215 and Cys226-Cys250. Catalysis depends on Ser230, which acts as the Charge relay system.

The protein belongs to the peptidase S1 family. As to expression, expressed in the midgut. Expression levels drop a few hours after blood feeding and pick up again 28 hours later.

Its subcellular location is the secreted. It catalyses the reaction Preferential cleavage: Arg-|-Xaa, Lys-|-Xaa.. In terms of biological role, constitutive trypsin that is expressed 2 days after emergence, coinciding with host seeking behavior of the female. The polypeptide is Trypsin-3 (TRYP3) (Anopheles gambiae (African malaria mosquito)).